Here is a 151-residue protein sequence, read N- to C-terminus: F-box protein GID2 (151 aa).

The segment covering 1-25 has biased composition (basic and acidic residues); that stretch reads MKRSTTDSDLAGDAHNETNKKMKST. Positions 1 to 27 are disordered; the sequence is MKRSTTDSDLAGDAHNETNKKMKSTEE. Positions 29 to 75 constitute an F-box domain; the sequence is EIGFSNLDENLVYEVLKHVDAKTLAMSSCVSKIWHKTAQDERLWELI.

Part of some SCF(GID2) complex, which consist of SKP1B, CUL1 cullin, GID2/SLY1 and some RING box protein. Interacts directly with SKP1A and SKP1B. Interacts directly with DELLA proteins GAI, RGA, RGL1, RGL3 and probably RGL2. May have a higher affinity for phosphorylated DELLA proteins. In terms of tissue distribution, expressed in all tissues tested, including rosette leaves, green siliques, flowers, stems, cauline leaves and seedlings.

It is found in the nucleus. Its pathway is protein modification; protein ubiquitination. Functionally, essential component of the SCF-type E3 ligase complex, SCF(GID2), a complex that positively regulates the gibberellin signaling pathway. Upon gibberellin treatment, the SCF(GID2) complex mediates the ubiquitination and subsequent degradation of DELLA proteins (GAI, RGA and RGL2), some repressors of the gibberellin pathway, leading to activate the pathway. The protein is F-box protein GID2 (GID2) of Arabidopsis thaliana (Mouse-ear cress).